The chain runs to 150 residues: Putative TBC1 domain family member 29 (150 aa).

The Rab-GAP TBC; truncated domain occupies 1–43; the sequence is MGHLDKEGLCTQGSSFSWLLRVLNDGISLGLTPCLWDMYLLEG. Polar residues predominate over residues 102-111; the sequence is ESSRGPSLLQ. Positions 102 to 125 are disordered; sequence ESSRGPSLLQTPPRVPGQQALSRG.

The sequence is that of Putative TBC1 domain family member 29 from Homo sapiens (Human).